Reading from the N-terminus, the 44-residue chain is Large ribosomal subunit protein bL34 (44 aa).

Composition is skewed to basic residues over residues 1 to 14 (MKRTLGGTTRKRQK) and 31 to 44 (LSARRRRGRHRLAV). Positions 1–44 (MKRTLGGTTRKRQKTSGFRARMRTASGRRVLSARRRRGRHRLAV) are disordered.

Belongs to the bacterial ribosomal protein bL34 family.

This chain is Large ribosomal subunit protein bL34, found in Gloeobacter violaceus (strain ATCC 29082 / PCC 7421).